Reading from the N-terminus, the 189-residue chain is uncharacterized protein (189 aa).

A run of 4 helical transmembrane segments spans residues 20–40, 46–66, 100–120, and 126–146; these read FILG…YLTF, TIII…IILI, VLLF…SLNI, and FVLY…GDVI.

To M.jannaschii MJ0795.1 and MJ1249.1.

The protein localises to the cell membrane. This is an uncharacterized protein from Methanocaldococcus jannaschii (strain ATCC 43067 / DSM 2661 / JAL-1 / JCM 10045 / NBRC 100440) (Methanococcus jannaschii).